A 209-amino-acid chain; its full sequence is Glycerol-3-phosphate acyltransferase (209 aa).

5 helical membrane passes run 13-33 (ALIA…GLLL), 63-83 (LAAA…LIAQ), 94-114 (PGLL…WLGF), 127-147 (LLGI…SIAF), and 151-171 (YSSL…WILG).

Belongs to the PlsY family. In terms of assembly, probably interacts with PlsX.

Its subcellular location is the cell inner membrane. It carries out the reaction an acyl phosphate + sn-glycerol 3-phosphate = a 1-acyl-sn-glycero-3-phosphate + phosphate. It functions in the pathway lipid metabolism; phospholipid metabolism. Functionally, catalyzes the transfer of an acyl group from acyl-phosphate (acyl-PO(4)) to glycerol-3-phosphate (G3P) to form lysophosphatidic acid (LPA). This enzyme utilizes acyl-phosphate as fatty acyl donor, but not acyl-CoA or acyl-ACP. In Allorhizobium ampelinum (strain ATCC BAA-846 / DSM 112012 / S4) (Agrobacterium vitis (strain S4)), this protein is Glycerol-3-phosphate acyltransferase.